The following is a 61-amino-acid chain: Large ribosomal subunit protein eL24 (61 aa).

Residues Cys7, Cys10, Cys33, and Cys37 each coordinate Zn(2+). The C4-type zinc-finger motif lies at 7-37 (CSFCGKEIPPATGLMYIRNDGSILWFCSNKC).

It belongs to the eukaryotic ribosomal protein eL24 family. Part of the 50S ribosomal subunit. Forms a cluster with proteins L3 and L14. The cofactor is Zn(2+).

Its function is as follows. Binds to the 23S rRNA. This chain is Large ribosomal subunit protein eL24, found in Sulfurisphaera tokodaii (strain DSM 16993 / JCM 10545 / NBRC 100140 / 7) (Sulfolobus tokodaii).